A 280-amino-acid chain; its full sequence is MRIDVLTIFPEYLDPLRHALLGKAIEQGKLAVGVHDLRQWATDAHKSVDDSPYGGGPGMVMKPEVWGPALDDVSSGTASTQDLQSALPHLSKPRHDDIHGVEARSYGESEDSDKPLLIVPTPAGKPFTQADAQAWSAEEHIVFACGRYEGIDQRVVDDAQQRYRVREVSIGDYVLIGGEVAALVIAEAVVRLIPGVLGNRRSHEEDSFSDGLLEGPSYTKPREWRDLQVPDVLTSGDHARVDRWRREQSLARTWQRRPELLDAAELSDADRAYLETLEED.

The disordered stretch occupies residues 71–94 (DDVSSGTASTQDLQSALPHLSKPR). Over residues 74 to 84 (SSGTASTQDLQ) the composition is skewed to polar residues. Residues Gly146 and 170-175 (IGDYVL) each bind S-adenosyl-L-methionine.

This sequence belongs to the RNA methyltransferase TrmD family. In terms of assembly, homodimer.

The protein localises to the cytoplasm. It catalyses the reaction guanosine(37) in tRNA + S-adenosyl-L-methionine = N(1)-methylguanosine(37) in tRNA + S-adenosyl-L-homocysteine + H(+). In terms of biological role, specifically methylates guanosine-37 in various tRNAs. The protein is tRNA (guanine-N(1)-)-methyltransferase of Corynebacterium aurimucosum (strain ATCC 700975 / DSM 44827 / CIP 107346 / CN-1) (Corynebacterium nigricans).